The primary structure comprises 3259 residues: Golgin subfamily B member 1 (3259 aa).

Methionine 1 is subject to N-acetylmethionine. At 1 to 3235 (MLSRLSGLAN…LRSLCHSRTR (3235 aa)) the chain is on the cytoplasmic side. Phosphoserine is present on residues serine 6, serine 17, serine 138, and serine 528. A coiled-coil region spans residues 48-593 (EDVQERLAYA…RAEEADHEVL (546 aa)). Residues 119–142 (GTVLPTEPQSEEQLSKHDKSSTEE) form a disordered region. A compositionally biased stretch (basic and acidic residues) spans 131 to 142 (QLSKHDKSSTEE). The disordered stretch occupies residues 624–652 (LMPNEESSLPAVEKEQASTEHQSRTSEEI). Over residues 635-650 (VEKEQASTEHQSRTSE) the composition is skewed to basic and acidic residues. Serine 653 carries the phosphoserine modification. 3 coiled-coil regions span residues 677-1028 (DIGQ…KEIP), 1062-1245 (LKQT…ESID), and 1301-1779 (GTSV…TEKH). The segment at 944–963 (AKKEQVEEDNEVSSGLKQNY) is disordered. Residues 1747–1763 (SEKDSLSEEVQDLKHQI) show a composition bias toward basic and acidic residues. The interval 1747 to 1829 (SEKDSLSEEV…SANPAVSKDF (83 aa)) is disordered. Polar residues-rich tracts occupy residues 1782-1794 (QTNV…QSIP) and 1802-1820 (SLSM…SAKS). A coiled-coil region spans residues 1828-3185 (DFSSHDEINN…EQIRRLEHSE (1358 aa)). Serine 2216, serine 2735, serine 2872, and serine 2884 each carry phosphoserine. A disordered region spans residues 2856-2876 (RKSEEGKQRSAAQPSTSPAEV). Positions 2865 to 2875 (SAAQPSTSPAE) are enriched in polar residues. The interval 2998–3021 (TQPLKVQYQRQASPETSASPDGSQ) is disordered. Serine 3037 carries the post-translational modification Phosphoserine. Residues 3107-3140 (IDVAPGAPQEKNGVHRKSDPEELREPQQSFSEAQ) are disordered. Residues 3118 to 3131 (NGVHRKSDPEELRE) show a composition bias toward basic and acidic residues. The helical transmembrane segment at 3236 to 3256 (VPLLAAIYFLMIHVLLILCFT) threads the bilayer. Residues 3257–3259 (GHL) lie on the Lumenal side of the membrane.

Homodimer; disulfide-linked. Interacts with PLK3.

It is found in the golgi apparatus membrane. Functionally, may participate in forming intercisternal cross-bridges of the Golgi complex. This is Golgin subfamily B member 1 (GOLGB1) from Homo sapiens (Human).